The chain runs to 122 residues: UPF0102 protein MUL_2060 (122 aa).

The protein belongs to the UPF0102 family.

This chain is UPF0102 protein MUL_2060, found in Mycobacterium ulcerans (strain Agy99).